Here is a 126-residue protein sequence, read N- to C-terminus: Large ribosomal subunit protein uL22 (126 aa).

The protein belongs to the universal ribosomal protein uL22 family. Part of the 50S ribosomal subunit.

In terms of biological role, this protein binds specifically to 23S rRNA; its binding is stimulated by other ribosomal proteins, e.g. L4, L17, and L20. It is important during the early stages of 50S assembly. It makes multiple contacts with different domains of the 23S rRNA in the assembled 50S subunit and ribosome. The globular domain of the protein is located near the polypeptide exit tunnel on the outside of the subunit, while an extended beta-hairpin is found that lines the wall of the exit tunnel in the center of the 70S ribosome. The chain is Large ribosomal subunit protein uL22 from Paracoccus denitrificans (strain Pd 1222).